A 444-amino-acid chain; its full sequence is Serine--tRNA ligase (444 aa).

L-serine is bound at residue 248 to 250 (TSE). 279–281 (RSE) contacts ATP. E302 provides a ligand contact to L-serine. Position 366–369 (366–369 (EISS)) interacts with ATP. Position 401 (S401) interacts with L-serine.

It belongs to the class-II aminoacyl-tRNA synthetase family. Type-1 seryl-tRNA synthetase subfamily. Homodimer. The tRNA molecule binds across the dimer.

Its subcellular location is the cytoplasm. It carries out the reaction tRNA(Ser) + L-serine + ATP = L-seryl-tRNA(Ser) + AMP + diphosphate + H(+). It catalyses the reaction tRNA(Sec) + L-serine + ATP = L-seryl-tRNA(Sec) + AMP + diphosphate + H(+). The protein operates within aminoacyl-tRNA biosynthesis; selenocysteinyl-tRNA(Sec) biosynthesis; L-seryl-tRNA(Sec) from L-serine and tRNA(Sec): step 1/1. In terms of biological role, catalyzes the attachment of serine to tRNA(Ser). Is also able to aminoacylate tRNA(Sec) with serine, to form the misacylated tRNA L-seryl-tRNA(Sec), which will be further converted into selenocysteinyl-tRNA(Sec). This is Serine--tRNA ligase from Polaromonas naphthalenivorans (strain CJ2).